Here is a 168-residue protein sequence, read N- to C-terminus: Ribosome maturation factor RimM (168 aa).

Residues 95-168 (KEGYYWSDLI…QIMVDWELDY (74 aa)) form the PRC barrel domain.

The protein belongs to the RimM family. As to quaternary structure, binds ribosomal protein uS19.

It is found in the cytoplasm. An accessory protein needed during the final step in the assembly of 30S ribosomal subunit, possibly for assembly of the head region. Essential for efficient processing of 16S rRNA. May be needed both before and after RbfA during the maturation of 16S rRNA. It has affinity for free ribosomal 30S subunits but not for 70S ribosomes. This is Ribosome maturation factor RimM from Nitrosomonas eutropha (strain DSM 101675 / C91 / Nm57).